The following is a 155-amino-acid chain: MTNVTEKVEQLAKPIVEREGMELVDVEFVKEGADWFLRVSIDKDGGVDLEDCVNINEKLSEALNQDDPIDEPYYLDVASPGAERPLKKTEDFEKAIGKHVYIKTHDPVKDATEFEGTLLTYSEEMLELEVRVKTRKLKIEIPVNKIAMARLAVVF.

It belongs to the RimP family.

The protein localises to the cytoplasm. Functionally, required for maturation of 30S ribosomal subunits. This is Ribosome maturation factor RimP from Exiguobacterium sibiricum (strain DSM 17290 / CCUG 55495 / CIP 109462 / JCM 13490 / 255-15).